The sequence spans 394 residues: MNPLATLEQGLADIDAQGLRRCRRVADTACGAHMTVDGRAIIGFASNDYLGLAAHPRLVEAFAEGARRYGSGSGGSHLLGGHSRAHATLEDELAAFSGGFSDAPRALYFSTGYMANLAALTALAGRGATIFSDALNHASLIDGARLSRANVQIYPHGDADALDARLRACDAPTKLIVSDTVFSMDGDVAPLARLVALAETHGAWLVVDDAHGFGVLGPQGRGALAAHGLRSPNLVYVGTLGKAAGVAGAFVVAHETVIEWLVQRARSYIFTTAAPPSVACAVSASLAVIASDEGDARRAHLGALIKRTRAILRATHWQPVDSHTAVQPLVIGSNEATLAAMAALDAQGLWVPAIRPPTVPAGTSRLRISLSAAHSFDDLARLEAALVTPIGAAA.

Substrate is bound at residue Arg-21. 112–113 contacts pyridoxal 5'-phosphate; it reads GY. Position 137 (His-137) interacts with substrate. Ser-183, His-211, and Thr-239 together coordinate pyridoxal 5'-phosphate. Lys-242 carries the N6-(pyridoxal phosphate)lysine modification. Substrate is bound at residue Thr-358.

The protein belongs to the class-II pyridoxal-phosphate-dependent aminotransferase family. BioF subfamily. In terms of assembly, homodimer. Pyridoxal 5'-phosphate serves as cofactor.

It carries out the reaction 6-carboxyhexanoyl-[ACP] + L-alanine + H(+) = (8S)-8-amino-7-oxononanoate + holo-[ACP] + CO2. It functions in the pathway cofactor biosynthesis; biotin biosynthesis. In terms of biological role, catalyzes the decarboxylative condensation of pimeloyl-[acyl-carrier protein] and L-alanine to produce 8-amino-7-oxononanoate (AON), [acyl-carrier protein], and carbon dioxide. This chain is 8-amino-7-oxononanoate synthase, found in Burkholderia pseudomallei (strain K96243).